The following is a 537-amino-acid chain: Copine-1 (537 aa).

C2 domains follow at residues M1–L114 and G123–H245. Positions 21, 27, 80, 82, 92, 153, and 159 each coordinate Ca(2+). K171 bears the N6-acetyllysine mark. Ca(2+) contacts are provided by D214, D216, and D222. In terms of domain architecture, VWFA spans N285–V505.

The protein belongs to the copine family. In terms of assembly, homodimer; homodimerizes via its C2 domains. Interacts with p65/RELA (via N-terminus); this interaction induces proteolytic cleavage of p65/RELA subunit and inhibition of NF-kappa-B transcriptional activity. Interacts (via VWFA domain) with ACTB, CCDC22, MYCBP2, PPP5C, RDX and UBE2O. It depends on Ca(2+) as a cofactor. As to expression, expressed in liver, spleen, muscle, testis, adrenal (at protein level).

It is found in the nucleus. It localises to the cytoplasm. The protein localises to the cell membrane. Its function is as follows. Calcium-dependent phospholipid-binding protein that plays a role in calcium-mediated intracellular processes. Involved in the TNF-alpha receptor signaling pathway in a calcium-dependent manner. Exhibits calcium-dependent phospholipid binding properties. Plays a role in neuronal progenitor cell differentiation; induces neurite outgrowth via a AKT-dependent signaling cascade and calcium-independent manner. May recruit target proteins to the cell membrane in a calcium-dependent manner. May function in membrane trafficking. Involved in TNF-alpha-induced NF-kappa-B transcriptional repression by inducing endoprotease processing of the transcription factor NF-kappa-B p65/RELA subunit. Also induces endoprotease processing of NF-kappa-B p50/NFKB1, p52/NFKB2, RELB and REL. The chain is Copine-1 from Bos taurus (Bovine).